We begin with the raw amino-acid sequence, 393 residues long: Envelope glycoprotein D (393 aa).

Positions 1–25 (MGRLTSGVGTAALLVVAVGLRVVCA) are cleaved as a signal peptide. Positions 25–57 (AKYALADPSLKMADPNRFRGKNLPVLDQLTDPP) are interaction with TNFRSF14. Residues 26–340 (KYALADPSLK…HAPAAPSNPG (315 aa)) are Virion surface-facing. Zn(2+) is bound at residue H64. 3 disulfides stabilise this stretch: C91-C214, C131-C227, and C143-C152. Residues N119 and N146 are each glycosylated (N-linked (GlcNAc...) asparagine; by host). D240 contributes to the Zn(2+) binding site. The segment at 261–305 (LKIAGWHGPKPPYTSTLLPPELSDTTNATQPELVPEDPEDSALLE) is profusion. A compositionally biased stretch (polar residues) spans 274–290 (TSTLLPPELSDTTNATQ). Positions 274-301 (TSTLLPPELSDTTNATQPELVPEDPEDS) are disordered. N-linked (GlcNAc...) asparagine; by host glycosylation occurs at N287. A helical membrane pass occupies residues 341–361 (LIIGALAGSTLAVLVIGGIAF). At 362 to 393 (WVRRRAQMAPKRLRLPHIRDDDAPPSHQPLFY) the chain is on the intravirion side.

This sequence belongs to the herpesviridae glycoprotein D family. As to quaternary structure, homodimer. Interacts with host receptor TNFRSF14. Interacts with host receptor NECTIN1. Interacts with host receptor NECTIN2. Interacts (via profusion domain) with gB; this interaction occurs in the absence of gH/gL. Interacts (via profusion domain) with gH/gL heterodimer; this interaction occurs in the absence of gB. Associates with the gB-gH/gL-gD complex. Interacts (via C-terminus) with UL11 tegument protein.

It is found in the virion membrane. Envelope glycoprotein that binds to the host cell entry receptors NECTIN1 and TNFRSF14/HVEM, promoting the virus entry into host cells. May trigger fusion with host membrane, by recruiting the fusion machinery composed of gB and gH/gL. The protein is Envelope glycoprotein D (gD) of Human herpesvirus 2 (strain HG52) (HHV-2).